Consider the following 480-residue polypeptide: Glycogen synthase (480 aa).

Residue lysine 15 participates in ADP-alpha-D-glucose binding.

Belongs to the glycosyltransferase 1 family. Bacterial/plant glycogen synthase subfamily.

The catalysed reaction is [(1-&gt;4)-alpha-D-glucosyl](n) + ADP-alpha-D-glucose = [(1-&gt;4)-alpha-D-glucosyl](n+1) + ADP + H(+). Its pathway is glycan biosynthesis; glycogen biosynthesis. Synthesizes alpha-1,4-glucan chains using ADP-glucose. This chain is Glycogen synthase, found in Rhizobium tropici.